The sequence spans 909 residues: UPF0182 protein H16_A1615 (909 aa).

Helical transmembrane passes span 16-36, 58-78, 114-134, 169-189, 205-225, 246-266, and 281-301; these read TWVVAVIVALIAVSRVTGLVV, ALLFLAVFAVSAGALWLSGWL, VAVLVGLLMAVGELSSWAIAL, WLLLLLGCSAVLAGVVYGLRG, ATHGSALLGLFFALQAWSYWL, VHVGLPVLWLQVGLAAAAAAA, and AAALLVVGSAIVLGTIWPALF.

The protein belongs to the UPF0182 family.

The protein localises to the cell membrane. The sequence is that of UPF0182 protein H16_A1615 from Cupriavidus necator (strain ATCC 17699 / DSM 428 / KCTC 22496 / NCIMB 10442 / H16 / Stanier 337) (Ralstonia eutropha).